A 507-amino-acid chain; its full sequence is ATP synthase subunit alpha, chloroplastic (507 aa).

An ATP-binding site is contributed by 170–177; that stretch reads GDRQTGKT.

Belongs to the ATPase alpha/beta chains family. F-type ATPases have 2 components, CF(1) - the catalytic core - and CF(0) - the membrane proton channel. CF(1) has five subunits: alpha(3), beta(3), gamma(1), delta(1), epsilon(1). CF(0) has four main subunits: a, b, b' and c.

It localises to the plastid. It is found in the chloroplast thylakoid membrane. It carries out the reaction ATP + H2O + 4 H(+)(in) = ADP + phosphate + 5 H(+)(out). Produces ATP from ADP in the presence of a proton gradient across the membrane. The alpha chain is a regulatory subunit. This chain is ATP synthase subunit alpha, chloroplastic, found in Citrus sinensis (Sweet orange).